The following is a 427-amino-acid chain: Probable fatty acid methyltransferase Rv3720 (427 aa).

S-adenosyl-L-methionine-binding positions include 167–168, 202–210, and 227–232; these read YT, LLDVGCGWG, and TLSAEQ.

It belongs to the CFA/CMAS family.

In terms of biological role, may be a S-adenosylmethionine-dependent methyltransferase involved in fatty acid metabolism. This is Probable fatty acid methyltransferase Rv3720 from Mycobacterium tuberculosis (strain ATCC 25618 / H37Rv).